The primary structure comprises 131 residues: MGRVRTKTTKRASRVVIEKYYPRLTLDFQTNKRIVDEVAIIASKRLRNKIAGYTTHLMKRIQRGPVRGISFKLQEEERERKDQYVPEVSELEVDRVNVDQDTKDMLKSLGYDQIPVRVLAPAPQERFRRRQ.

It belongs to the eukaryotic ribosomal protein eS17 family. Component of the small ribosomal subunit (SSU). Mature yeast ribosomes consist of a small (40S) and a large (60S) subunit. The 40S small subunit contains 1 molecule of ribosomal RNA (18S rRNA) and at least 33 different proteins. The large 60S subunit contains 3 rRNA molecules (25S, 5.8S and 5S rRNA) and at least 46 different proteins.

It localises to the cytoplasm. Component of the ribosome, a large ribonucleoprotein complex responsible for the synthesis of proteins in the cell. The small ribosomal subunit (SSU) binds messenger RNAs (mRNAs) and translates the encoded message by selecting cognate aminoacyl-transfer RNA (tRNA) molecules. The large subunit (LSU) contains the ribosomal catalytic site termed the peptidyl transferase center (PTC), which catalyzes the formation of peptide bonds, thereby polymerizing the amino acids delivered by tRNAs into a polypeptide chain. The nascent polypeptides leave the ribosome through a tunnel in the LSU and interact with protein factors that function in enzymatic processing, targeting, and the membrane insertion of nascent chains at the exit of the ribosomal tunnel. The polypeptide is Small ribosomal subunit protein eS17A (rps1701) (Schizosaccharomyces pombe (strain 972 / ATCC 24843) (Fission yeast)).